Here is a 195-residue protein sequence, read N- to C-terminus: MSALVPIVIEQTNRGERAYDIYSRLLKDRIVILSGEITDDIASLIVAQLLFLEAEDPDKDIYLYINSPGGSVTAGFAIYDTIQYIKPDVSTICVGMAASMGAFLLAAGAKGKRFALPNSEIMIHQPIGGVRGQATDIKIHAEWILKIKQRINRILAERTGQPIEVIERDTERDFFMTAEEALKYGIIDKVIERRP.

The active-site Nucleophile is serine 99. Residue histidine 124 is part of the active site.

The protein belongs to the peptidase S14 family. In terms of assembly, fourteen ClpP subunits assemble into 2 heptameric rings which stack back to back to give a disk-like structure with a central cavity, resembling the structure of eukaryotic proteasomes.

It is found in the cytoplasm. It carries out the reaction Hydrolysis of proteins to small peptides in the presence of ATP and magnesium. alpha-casein is the usual test substrate. In the absence of ATP, only oligopeptides shorter than five residues are hydrolyzed (such as succinyl-Leu-Tyr-|-NHMec, and Leu-Tyr-Leu-|-Tyr-Trp, in which cleavage of the -Tyr-|-Leu- and -Tyr-|-Trp bonds also occurs).. Its function is as follows. Cleaves peptides in various proteins in a process that requires ATP hydrolysis. Has a chymotrypsin-like activity. Plays a major role in the degradation of misfolded proteins. The protein is ATP-dependent Clp protease proteolytic subunit of Caldicellulosiruptor saccharolyticus (strain ATCC 43494 / DSM 8903 / Tp8T 6331).